Reading from the N-terminus, the 464-residue chain is 3-isopropylmalate dehydratase large subunit (464 aa).

Residues Cys-345, Cys-405, and Cys-408 each coordinate [4Fe-4S] cluster.

The protein belongs to the aconitase/IPM isomerase family. LeuC type 1 subfamily. In terms of assembly, heterodimer of LeuC and LeuD. [4Fe-4S] cluster serves as cofactor.

The enzyme catalyses (2R,3S)-3-isopropylmalate = (2S)-2-isopropylmalate. It participates in amino-acid biosynthesis; L-leucine biosynthesis; L-leucine from 3-methyl-2-oxobutanoate: step 2/4. Its function is as follows. Catalyzes the isomerization between 2-isopropylmalate and 3-isopropylmalate, via the formation of 2-isopropylmaleate. This chain is 3-isopropylmalate dehydratase large subunit, found in Bacteroides fragilis (strain ATCC 25285 / DSM 2151 / CCUG 4856 / JCM 11019 / LMG 10263 / NCTC 9343 / Onslow / VPI 2553 / EN-2).